The following is a 523-amino-acid chain: DELLA protein RGL3 (523 aa).

Residues 1–28 (MKRSHQETSVEEEAPSMVEKLENGCGGG) form a disordered region. The DELLA motif signature appears at 34–38 (DEFLA). Positions 56–60 (LEQLE) match the LEXLE motif motif. Positions 78–82 (VHYNP) match the VHYNP motif motif. The GRAS domain occupies 148-516 (VLIEETGVRL…KPLIAASAWK (369 aa)). Residues 155 to 209 (VRLVQALVACAEAVQLENLSLADALVKRVGLLAASQAGAMGKVATYFAEALARRI) form a leucine repeat I (LRI) region. Positions 228-293 (QMNFYDSCPY…GGPPSFRLTG (66 aa)) are VHIID. Positions 259–263 (VHVID) match the VHIID motif. The segment at 305-337 (ELGWKLAQLAQAIGVEFKFNGLTTERLSDLEPD) is leucine repeat II (LRII). Positions 348–437 (LVVNSVFELH…EVYLGRQILN (90 aa)) are PFYRE. The short motif at 356–360 (LHPVL) is the LXXLL motif element. The segment at 440-516 (ATEGSDRIER…KPLIAASAWK (77 aa)) is SAW.

Belongs to the GRAS family. DELLA subfamily. In terms of assembly, interacts directly with the GID2/SLY1 component of the SCF(GID2) complex, suggesting that it may be ubiquitinated. Interacts (via N-terminus) with GID1A, GID1B and GID1B (via N-terminus). Interacts with the BOI proteins BOI, BRG1, BRG2 and BRG3. Phosphorylated. In terms of processing, may be ubiquitinated. In terms of tissue distribution, expressed at very low level. Mainly expressed in germinating seeds and flowers and siliques. Not expressed in other tissues.

Its subcellular location is the nucleus. Probable transcriptional regulator that acts as a repressor of the gibberellin (GA) signaling pathway. No effect of the BOI proteins on its stability. Probably acts by participating in large multiprotein complexes that repress transcription of GA-inducible genes. Its activity may be regulated by phytohormones such as auxin and ethylene. This Arabidopsis thaliana (Mouse-ear cress) protein is DELLA protein RGL3 (RGL3).